The primary structure comprises 420 residues: Carbohydrate sulfotransferase 12 (420 aa).

Topologically, residues 1–5 (MAKSR) are cytoplasmic. Residues 6–26 (LFCLLVALGSVFMILFIIVYW) form a helical; Signal-anchor for type II membrane protein membrane-spanning segment. At 27 to 420 (DNVGTANLNL…YPKPDDLLSV (394 aa)) the chain is on the lumenal side. N-linked (GlcNAc...) asparagine glycans are attached at residues N76 and N139. 176–182 (PKVACTN) is a 3'-phosphoadenylyl sulfate binding site. An N-linked (GlcNAc...) asparagine glycan is attached at N215. 251-259 (RDPFVRLIS) is a binding site for 3'-phosphoadenylyl sulfate. N286 and N376 each carry an N-linked (GlcNAc...) asparagine glycan.

This sequence belongs to the sulfotransferase 2 family.

Its subcellular location is the golgi apparatus membrane. The enzyme catalyses chondroitin beta-D-glucuronate + n 3'-phosphoadenylyl sulfate = chondroitin 4'-sulfate + n adenosine 3',5'-bisphosphate + n H(+). Its function is as follows. Catalyzes the transfer of sulfate to position 4 of the N-acetylgalactosamine (GalNAc) residue of chondroitin and desulfated dermatan sulfate. Chondroitin sulfate constitutes the predominant proteoglycan present in cartilage and is distributed on the surfaces of many cells and extracellular matrices. This Xenopus laevis (African clawed frog) protein is Carbohydrate sulfotransferase 12 (chst12).